We begin with the raw amino-acid sequence, 345 residues long: Anthranilate phosphoribosyltransferase (345 aa).

5-phospho-alpha-D-ribose 1-diphosphate is bound by residues Gly86, 89–90, Thr94, 96–99, 114–122, and Ala126; these read GD, NIST, and KHGNRNLSS. An anthranilate-binding site is contributed by Gly86. Residue Ser98 participates in Mg(2+) binding. Residue Asn117 coordinates anthranilate. Arg172 provides a ligand contact to anthranilate. The Mg(2+) site is built by Asp231 and Glu232.

It belongs to the anthranilate phosphoribosyltransferase family. Homodimer. Requires Mg(2+) as cofactor.

The catalysed reaction is N-(5-phospho-beta-D-ribosyl)anthranilate + diphosphate = 5-phospho-alpha-D-ribose 1-diphosphate + anthranilate. It participates in amino-acid biosynthesis; L-tryptophan biosynthesis; L-tryptophan from chorismate: step 2/5. Its function is as follows. Catalyzes the transfer of the phosphoribosyl group of 5-phosphorylribose-1-pyrophosphate (PRPP) to anthranilate to yield N-(5'-phosphoribosyl)-anthranilate (PRA). This chain is Anthranilate phosphoribosyltransferase, found in Jannaschia sp. (strain CCS1).